A 182-amino-acid polypeptide reads, in one-letter code: Transcription termination/antitermination protein NusG (182 aa).

The region spanning 131–163 (VGEQVRIKSGPFANQVGEVQEIEADKFKLTVLV) is the KOW domain.

The protein belongs to the NusG family.

In terms of biological role, participates in transcription elongation, termination and antitermination. The chain is Transcription termination/antitermination protein NusG from Staphylococcus carnosus (strain TM300).